The chain runs to 302 residues: Aspartate carbamoyltransferase catalytic subunit (302 aa).

2 residues coordinate carbamoyl phosphate: arginine 53 and threonine 54. Position 82 (lysine 82) interacts with L-aspartate. Arginine 103, histidine 131, and glutamine 134 together coordinate carbamoyl phosphate. Residues arginine 164 and arginine 223 each contribute to the L-aspartate site. Carbamoyl phosphate contacts are provided by leucine 260 and proline 261.

Belongs to the aspartate/ornithine carbamoyltransferase superfamily. ATCase family. Heterooligomer of catalytic and regulatory chains.

The catalysed reaction is carbamoyl phosphate + L-aspartate = N-carbamoyl-L-aspartate + phosphate + H(+). Its pathway is pyrimidine metabolism; UMP biosynthesis via de novo pathway; (S)-dihydroorotate from bicarbonate: step 2/3. In terms of biological role, catalyzes the condensation of carbamoyl phosphate and aspartate to form carbamoyl aspartate and inorganic phosphate, the committed step in the de novo pyrimidine nucleotide biosynthesis pathway. The polypeptide is Aspartate carbamoyltransferase catalytic subunit (Methanococcus maripaludis (strain C5 / ATCC BAA-1333)).